A 261-amino-acid chain; its full sequence is 4-hydroxy-tetrahydrodipicolinate reductase (261 aa).

Residues 11–16 (GFTGAM), 96–98 (GTT), and 122–125 (APNF) each bind NAD(+). Residue histidine 152 is the Proton donor/acceptor of the active site. A (S)-2,3,4,5-tetrahydrodipicolinate-binding site is contributed by histidine 153. The active-site Proton donor is lysine 156. A (S)-2,3,4,5-tetrahydrodipicolinate-binding site is contributed by 162 to 163 (GT).

This sequence belongs to the DapB family.

The protein localises to the cytoplasm. The catalysed reaction is (S)-2,3,4,5-tetrahydrodipicolinate + NAD(+) + H2O = (2S,4S)-4-hydroxy-2,3,4,5-tetrahydrodipicolinate + NADH + H(+). It carries out the reaction (S)-2,3,4,5-tetrahydrodipicolinate + NADP(+) + H2O = (2S,4S)-4-hydroxy-2,3,4,5-tetrahydrodipicolinate + NADPH + H(+). The protein operates within amino-acid biosynthesis; L-lysine biosynthesis via DAP pathway; (S)-tetrahydrodipicolinate from L-aspartate: step 4/4. Its function is as follows. Catalyzes the conversion of 4-hydroxy-tetrahydrodipicolinate (HTPA) to tetrahydrodipicolinate. This chain is 4-hydroxy-tetrahydrodipicolinate reductase, found in Lactobacillus acidophilus (strain ATCC 700396 / NCK56 / N2 / NCFM).